A 201-amino-acid chain; its full sequence is Probable molybdenum cofactor guanylyltransferase (201 aa).

Residues 20–22 (LAG), lysine 32, aspartate 77, and aspartate 106 each bind GTP. Aspartate 106 is a binding site for Mg(2+).

Belongs to the MobA family. The cofactor is Mg(2+).

It is found in the cytoplasm. The enzyme catalyses Mo-molybdopterin + GTP + H(+) = Mo-molybdopterin guanine dinucleotide + diphosphate. Transfers a GMP moiety from GTP to Mo-molybdopterin (Mo-MPT) cofactor (Moco or molybdenum cofactor) to form Mo-molybdopterin guanine dinucleotide (Mo-MGD) cofactor. This chain is Probable molybdenum cofactor guanylyltransferase, found in Aquifex aeolicus (strain VF5).